Here is a 158-residue protein sequence, read N- to C-terminus: MTTTIPTSKSACSVTTRPGNAAVDYGGAQIRAYLHHLATVVTIRGEIDAANVEQISEHVRRFSLGTNPMVLDLSELSHFSGAGISLLCILDEDCRAAGVQWALVASPAVVEQLGGRCDQGEHESMFPMARSVHKALHDLADAIDRRRQLVLPLISRSA.

Thr2 is modified (phosphothreonine; by PknD). Residues 28-139 (AQIRAYLHHL…RSVHKALHDL (112 aa)) enclose the STAS domain.

The protein belongs to the anti-sigma-factor antagonist family. In terms of assembly, interacts with Rv2638. Phosphorylation abolishes binding to Rv2638. In terms of processing, phosphorylated on Thr-2 by the serine/threonine-protein kinase PknD. Also phosphorylated to a lesser extent by PknB and PknE. Dephosphorylated by PstP.

With respect to regulation, regulated by PknD under osmotic stress. Its function is as follows. Part of a signaling pathway that enables adaptation to osmotic stress through cell wall remodeling and virulence factor production. Unphosphorylated OprA forms a complex with the anti-anti-sigma-factor paralog Rv2638 that dissociates on OprA phosphorylation by PknD. Phosphorylation of OprA may stimulate the release of SigF from an inhibitory complex and enable the transcription of osmotically regulated genes, such as oprA and the ESX-1-associated virulence factor espA. The protein is Osmosensory protein A of Mycobacterium tuberculosis (strain ATCC 25618 / H37Rv).